A 243-amino-acid chain; its full sequence is Phosphoribosyl isomerase A (243 aa).

Residue aspartate 9 is the Proton acceptor of the active site. Residue aspartate 128 is the Proton donor of the active site.

The protein belongs to the HisA/HisF family.

The protein resides in the cytoplasm. The catalysed reaction is 1-(5-phospho-beta-D-ribosyl)-5-[(5-phospho-beta-D-ribosylamino)methylideneamino]imidazole-4-carboxamide = 5-[(5-phospho-1-deoxy-D-ribulos-1-ylimino)methylamino]-1-(5-phospho-beta-D-ribosyl)imidazole-4-carboxamide. It catalyses the reaction N-(5-phospho-beta-D-ribosyl)anthranilate = 1-(2-carboxyphenylamino)-1-deoxy-D-ribulose 5-phosphate. It functions in the pathway amino-acid biosynthesis; L-histidine biosynthesis; L-histidine from 5-phospho-alpha-D-ribose 1-diphosphate: step 4/9. It participates in amino-acid biosynthesis; L-tryptophan biosynthesis; L-tryptophan from chorismate: step 3/5. Involved in both the histidine and tryptophan biosynthetic pathways. This chain is Phosphoribosyl isomerase A, found in Mycolicibacterium paratuberculosis (strain ATCC BAA-968 / K-10) (Mycobacterium paratuberculosis).